Consider the following 460-residue polypeptide: A-type ATP synthase subunit B (460 aa).

The protein belongs to the ATPase alpha/beta chains family. As to quaternary structure, has multiple subunits with at least A(3), B(3), C, D, E, F, H, I and proteolipid K(x).

The protein localises to the cell membrane. Its function is as follows. Component of the A-type ATP synthase that produces ATP from ADP in the presence of a proton gradient across the membrane. The B chain is a regulatory subunit. The chain is A-type ATP synthase subunit B from Methanosarcina barkeri (strain Fusaro / DSM 804).